A 511-amino-acid chain; its full sequence is MMKMRWLSAAVMLTLYTSSSWAFSIDDVAKQAQSLAGKGYEAPKSNLPSVFRDMKYADYQQIQFNHDKAYWNNLKTPFKLEFYHQGMYFDTPVKINEVTATAVKRIKYSPDYFTFGDVQHDKDTVKDLGFAGFKVLYPINSKDKNDEIVSMLGASYFRVIGAGQVYGLSARGLAIDTALPSGEEFPRFKEFWIERPKPTDKRLTIYALLDSPRATGAYKFVVMPGRDTVVDVQSKIYLREKVGKLGVAPLTSMFLFGPNQPSPANNYRPELHDSNGLSIHAGNGEWIWRPLNNPKHLAVSSFSMENPQGFGLLQRGRDFSRFEDLDDRYDLRPSAWVTPKGEWGKGSVELVEIPTNDETNDNIVAYWTPDQLPEPGKEMNFKYTITFSRDEDKLHAPDNAWVQQTRRSTGDVKQSNLIRQPDGTIAFVVDFTGAEMKKLPEDTPVTAQTSIGDNGEIVESTVRYNPVTKGWRLVMRVKVKDAKKTTEMRAALVNADQTLSETWSYQLPANE.

An N-terminal signal peptide occupies residues 1-22; that stretch reads MMKMRWLSAAVMLTLYTSSSWA.

The protein belongs to the OpgD/OpgG family.

It is found in the periplasm. It functions in the pathway glycan metabolism; osmoregulated periplasmic glucan (OPG) biosynthesis. In terms of biological role, involved in the biosynthesis of osmoregulated periplasmic glucans (OPGs). The chain is Glucans biosynthesis protein G from Escherichia coli O8 (strain IAI1).